The primary structure comprises 462 residues: Cytochrome c biogenesis protein CcsB (462 aa).

The next 3 helical transmembrane spans lie at 30-50 (LRVA…GTVI), 89-109 (TWWY…CTFR), and 175-195 (IGPI…IWGA).

This sequence belongs to the Ccs1/CcsB family. As to quaternary structure, may interact with CcsA.

Its subcellular location is the cellular thylakoid membrane. Functionally, required during biogenesis of c-type cytochromes (cytochrome c6 and cytochrome f) at the step of heme attachment. The polypeptide is Cytochrome c biogenesis protein CcsB (Picosynechococcus sp. (strain ATCC 27264 / PCC 7002 / PR-6) (Agmenellum quadruplicatum)).